Reading from the N-terminus, the 178-residue chain is Ribosome maturation factor RimM (178 aa).

The region spanning 101–178 (TDEYYWYQLV…VMRVEWDADF (78 aa)) is the PRC barrel domain.

The protein belongs to the RimM family. As to quaternary structure, binds ribosomal protein uS19.

Its subcellular location is the cytoplasm. Its function is as follows. An accessory protein needed during the final step in the assembly of 30S ribosomal subunit, possibly for assembly of the head region. Essential for efficient processing of 16S rRNA. May be needed both before and after RbfA during the maturation of 16S rRNA. It has affinity for free ribosomal 30S subunits but not for 70S ribosomes. The polypeptide is Ribosome maturation factor RimM (Pseudomonas entomophila (strain L48)).